The following is a 1020-amino-acid chain: Non-canonical nonribosomal peptide synthetase hkm10 (1020 aa).

Residues 21-419 (QMLEDPDAIA…GRFDHQVKIR (399 aa)) form an adenylation (A) domain region. A Carrier domain is found at 526-608 (QDKVPSEGAS…QLAHIVDRNQ (83 aa)). Serine 568 is modified (O-(pantetheine 4'-phosphoryl)serine). Residues 652-894 (LTGATGFVGA…FVPIDYVTST (243 aa)) are short-chain dehydrogenase/reductase (R) domain.

Belongs to the NRP synthetase family.

It functions in the pathway secondary metabolite biosynthesis. Its function is as follows. Non-canonical nonribosomal peptide synthetase; part of the gene cluster that mediates the biosynthesis of hancockiamides, an unusual new family of N-cinnamoylated piperazines. The NRPS hkm10 and the NmrA-like reductase hkm9 are proposed to convert two molecules of L-Phe to the intermediary piperazine called xenocockiamide A. Xenocockiamide A is then converted to hancockiamide D via a series of hydroxylations and O-methylations. The tyrosinase hkm6 may catalyze an aromatic hydroxylation, then the 2-oxoglutarate-dependent Fe(II) dioxygenase hkm4 and the FAD-dependent phenol hydroxylase hkm7 may catalyze consecutive hydroxylations to install 2 more hydroxy groups, and the methyltransferase hkm8 probably catalyzes two methylations using 2 molecules of S-adenosyl-L-methionine (SAM). The NRPS hkm11 activates and transfers trans-cinnamate supplied by the PAL hkm12 to hancockiamide D and produces hancockiamide A. NRPS Hkm11 has the flexibility to tolerate the bulky hancockiamide G as a substrate and the absence of the acetyl-transferase hkm3 opens up the opportunity for hkm11 to introduce a second N-cinnamoyl moiety. The cytochrome P450 monooxygenase hkm5 catalyzes the methylenedioxy bridge formation, converting hancockiamide A into hancockiamide G. Hkm5 can also convert hancockiamide B into hancockiamide C, and hancockiamide D into hancockiamide H. The N-acetyltransferase hkm3 finally transfers an acetyl group to 1-N of piperazine, converting hancockiamide A into hancockiamide B and hancockiamide G into hancockiamide C. The protein is Non-canonical nonribosomal peptide synthetase hkm10 of Aspergillus hancockii.